Here is a 76-residue protein sequence, read N- to C-terminus: Small proline-rich protein 2E (76 aa).

Repeat copies occupy residues K21–H29, P30–P38, and P39–E47. Residues K21–E47 form a 3 X 9 AA approximate tandem repeats region. Residues P52–K76 are disordered.

Belongs to the cornifin (SPRR) family. In terms of tissue distribution, expressed in uterus.

It localises to the cytoplasm. In terms of biological role, cross-linked envelope protein of keratinocytes. It is a keratinocyte protein that first appears in the cell cytosol, but ultimately becomes cross-linked to membrane proteins by transglutaminase. All that results in the formation of an insoluble envelope beneath the plasma membrane. The polypeptide is Small proline-rich protein 2E (Sprr2e) (Mus musculus (Mouse)).